Here is a 504-residue protein sequence, read N- to C-terminus: Galactokinase (504 aa).

R47, D53, H54, and D56 together coordinate alpha-D-galactose. Residues G150, G152, S154, and S155 each coordinate ATP. Residues N196 and D200 each contribute to the alpha-D-galactose site. D200 acts as the Proton acceptor in catalysis. 3 residues coordinate ATP: S244, N245, and K246. Y254 contacts alpha-D-galactose.

This sequence belongs to the GHMP kinase family. GalK subfamily.

It carries out the reaction alpha-D-galactose + ATP = alpha-D-galactose 1-phosphate + ADP + H(+). It functions in the pathway carbohydrate metabolism; galactose metabolism. In terms of biological role, galactokinase is a key enzyme in the galactose metabolism where it catalyzes the conversion of alpha-D-galactose to galactose 1-phosphate. Can also induce the transcription of the gal genes in response to the organism being challenged with galactose as the sole source of carbon. This chain is Galactokinase, found in Candida parapsilosis (Yeast).